A 41-amino-acid chain; its full sequence is uncharacterized protein (41 aa).

This is an uncharacterized protein from Bacillus subtilis (strain 168).